A 100-amino-acid polypeptide reads, in one-letter code: Large ribosomal subunit protein bL21 (100 aa).

It belongs to the bacterial ribosomal protein bL21 family. In terms of assembly, part of the 50S ribosomal subunit. Contacts protein L20.

In terms of biological role, this protein binds to 23S rRNA in the presence of protein L20. The sequence is that of Large ribosomal subunit protein bL21 from Ureaplasma parvum serovar 3 (strain ATCC 27815 / 27 / NCTC 11736).